A 290-amino-acid polypeptide reads, in one-letter code: Protease HtpX (290 aa).

A run of 2 helical transmembrane segments spans residues 6–26 and 36–56; these read LFLV…NILF and ISGL…ISLL. Histidine 143 contributes to the Zn(2+) binding site. Glutamate 144 is an active-site residue. Residue histidine 147 participates in Zn(2+) binding. Helical transmembrane passes span 158–178 and 200–220; these read LIQG…AGVI and ITVF…VMWF. Residue glutamate 225 coordinates Zn(2+).

The protein belongs to the peptidase M48B family. Zn(2+) is required as a cofactor.

Its subcellular location is the cell inner membrane. In Aeromonas hydrophila subsp. hydrophila (strain ATCC 7966 / DSM 30187 / BCRC 13018 / CCUG 14551 / JCM 1027 / KCTC 2358 / NCIMB 9240 / NCTC 8049), this protein is Protease HtpX.